The sequence spans 966 residues: Mitogen-activated protein kinase kinase kinase 13 (966 aa).

Disordered regions lie at residues 1–22 (MANF…SESK), 30–49 (ELTA…QQEK), and 90–114 (HDES…SGTE). The segment covering 95–113 (TAVSQGNSNTVDGESTSGT) has biased composition (polar residues). Positions 168–409 (ISELQWLGSG…FRQTLMHLDI (242 aa)) constitute a Protein kinase domain. Residues 174–182 (LGSGAQGAV) and K195 each bind ATP. The active-site Proton acceptor is the D279. 2 leucine-zipper regions span residues 433–454 (VKKH…DEEL) and 486–507 (LSAI…EQAV). Disordered regions lie at residues 534–599 (KRKG…RGSH), 611–655 (AQEN…HHPR), 744–834 (DIPS…RRQR), and 846–908 (STFS…GLSD). Residues 567-581 (SPLSGSPKMSTSSSK) are compositionally biased toward low complexity. The span at 582-594 (SRYRSKPRHRRGN) shows a compositional bias: basic residues. 2 stretches are compositionally biased toward polar residues: residues 611 to 629 (AQEN…SQYP) and 785 to 795 (RSESSLGTSHL). A compositionally biased stretch (acidic residues) spans 814 to 827 (DSSEEEEGEVDSEV). The tract at residues 815–828 (SSEEEEGEVDSEVE) is acidic. A compositionally biased stretch (polar residues) spans 846 to 855 (STFSSENFSV). Residues 873–887 (LADKLEDRLAEKLDD) are compositionally biased toward basic and acidic residues.

Belongs to the protein kinase superfamily. STE Ser/Thr protein kinase family. MAP kinase kinase kinase subfamily. In terms of assembly, homodimer; forms dimers through the leucine-zipper motif. Interacts with the C-terminus of MAPK8IP1 through the kinase catalytic domain. Binds PRDX3. Associates with the IKK complex through the kinase domain. Mg(2+) serves as cofactor. Post-translationally, autophosphorylated on serine and threonine residues. In terms of tissue distribution, expressed in the adult brain, liver, placenta and pancreas, with expression strongest in the pancreas.

Its subcellular location is the cytoplasm. The protein resides in the membrane. It catalyses the reaction L-seryl-[protein] + ATP = O-phospho-L-seryl-[protein] + ADP + H(+). The enzyme catalyses L-threonyl-[protein] + ATP = O-phospho-L-threonyl-[protein] + ADP + H(+). With respect to regulation, activated by autophosphorylation and homodimerization. In terms of biological role, activates the JUN N-terminal pathway through activation of the MAP kinase kinase MAP2K7. Acts synergistically with PRDX3 to regulate the activation of NF-kappa-B in the cytosol. This activation is kinase-dependent and involves activating the IKK complex, the IKBKB-containing complex that phosphorylates inhibitors of NF-kappa-B. This is Mitogen-activated protein kinase kinase kinase 13 from Homo sapiens (Human).